The primary structure comprises 157 residues: Peptide methionine sulfoxide reductase MsrB (157 aa).

Residues 14-137 (DNDLRERLTP…NSAALRFVPL (124 aa)) enclose the MsrB domain. The active-site Nucleophile is Cys126.

It belongs to the MsrB Met sulfoxide reductase family.

It carries out the reaction L-methionyl-[protein] + [thioredoxin]-disulfide + H2O = L-methionyl-(R)-S-oxide-[protein] + [thioredoxin]-dithiol. In Deinococcus radiodurans (strain ATCC 13939 / DSM 20539 / JCM 16871 / CCUG 27074 / LMG 4051 / NBRC 15346 / NCIMB 9279 / VKM B-1422 / R1), this protein is Peptide methionine sulfoxide reductase MsrB.